The chain runs to 231 residues: Cytochrome c oxidase subunit 2 (231 aa).

The Mitochondrial intermembrane segment spans residues 1–14 (MAHPVHVGLKEATS). Residues 15-45 (PFMEELIAFHDHTLMIIFLISSLVLYIISMM) traverse the membrane as a helical segment. Residues 46–59 (LTTKLTHTSTMNAQ) lie on the Mitochondrial matrix side of the membrane. A helical membrane pass occupies residues 60–87 (EIEIIWTILPAIILIMIALPSLRILYMT). At 88 to 231 (DEFNKPYLTL…WASYLYIVSL (144 aa)) the chain is on the mitochondrial intermembrane side. Histidine 161, cysteine 196, glutamate 198, cysteine 200, histidine 204, and methionine 207 together coordinate Cu cation. Glutamate 198 serves as a coordination point for Mg(2+).

The protein belongs to the cytochrome c oxidase subunit 2 family. Component of the cytochrome c oxidase (complex IV, CIV), a multisubunit enzyme composed of 14 subunits. The complex is composed of a catalytic core of 3 subunits MT-CO1, MT-CO2 and MT-CO3, encoded in the mitochondrial DNA, and 11 supernumerary subunits COX4I, COX5A, COX5B, COX6A, COX6B, COX6C, COX7A, COX7B, COX7C, COX8 and NDUFA4, which are encoded in the nuclear genome. The complex exists as a monomer or a dimer and forms supercomplexes (SCs) in the inner mitochondrial membrane with NADH-ubiquinone oxidoreductase (complex I, CI) and ubiquinol-cytochrome c oxidoreductase (cytochrome b-c1 complex, complex III, CIII), resulting in different assemblies (supercomplex SCI(1)III(2)IV(1) and megacomplex MCI(2)III(2)IV(2)). Found in a complex with TMEM177, COA6, COX18, COX20, SCO1 and SCO2. Interacts with TMEM177 in a COX20-dependent manner. Interacts with COX20. Interacts with COX16. The cofactor is Cu cation.

The protein resides in the mitochondrion inner membrane. It carries out the reaction 4 Fe(II)-[cytochrome c] + O2 + 8 H(+)(in) = 4 Fe(III)-[cytochrome c] + 2 H2O + 4 H(+)(out). Functionally, component of the cytochrome c oxidase, the last enzyme in the mitochondrial electron transport chain which drives oxidative phosphorylation. The respiratory chain contains 3 multisubunit complexes succinate dehydrogenase (complex II, CII), ubiquinol-cytochrome c oxidoreductase (cytochrome b-c1 complex, complex III, CIII) and cytochrome c oxidase (complex IV, CIV), that cooperate to transfer electrons derived from NADH and succinate to molecular oxygen, creating an electrochemical gradient over the inner membrane that drives transmembrane transport and the ATP synthase. Cytochrome c oxidase is the component of the respiratory chain that catalyzes the reduction of oxygen to water. Electrons originating from reduced cytochrome c in the intermembrane space (IMS) are transferred via the dinuclear copper A center (CU(A)) of subunit 2 and heme A of subunit 1 to the active site in subunit 1, a binuclear center (BNC) formed by heme A3 and copper B (CU(B)). The BNC reduces molecular oxygen to 2 water molecules using 4 electrons from cytochrome c in the IMS and 4 protons from the mitochondrial matrix. The protein is Cytochrome c oxidase subunit 2 (MT-CO2) of Brachyteles hypoxanthus (Northern muriqui).